A 461-amino-acid chain; its full sequence is Ufm1-specific protease 2 (461 aa).

Residues Cys-294, Asp-418, and His-420 contribute to the active site.

It belongs to the peptidase C78 family. Expressed at high level in brain, kidney, stomach, skeletal muscle, liver, pancreas, spleen and testis.

It is found in the endoplasmic reticulum. Its subcellular location is the cytoplasm. It localises to the nucleus. Thiol-dependent isopeptidase that specifically cleaves UFM1, a ubiquitin-like modifier protein, from conjugated proteins, such as CD274/PD-L1, CYB5R3, DDRGK1, MRE11, RPL26/uL24, TRIP4 and RPL26/uL24. While it is also able to mediate the processing of UFM1 precursors, a prerequisite for conjugation reactions, UFSP2 mainly acts as a protein deUFMylase that mediates deconjugation of UFM1 from target proteins. Mediates deUFMylation of RPL26/uL24, a critical step to release the UFM1 ribosome E3 ligase (UREL) complex during the recycling of 60S ribosome subunits from the endoplasmic reticulum. Catalyzes deUFMylation of TRIP4, regulating intracellular nuclear receptors transactivation and thereby regulate cell proliferation and differentiation. The sequence is that of Ufm1-specific protease 2 from Mus musculus (Mouse).